A 490-amino-acid chain; its full sequence is Betaine aldehyde dehydrogenase (490 aa).

Thr-26, Ile-27, and Asp-93 together coordinate K(+). 150 to 152 (GAW) serves as a coordination point for NAD(+). Residue Lys-162 is the Charge relay system of the active site. NAD(+) is bound at residue 176–179 (KPSE). Val-180 is a K(+) binding site. 230–233 (GVAS) is a binding site for NAD(+). Leu-246 is a K(+) binding site. Catalysis depends on Glu-252, which acts as the Proton acceptor. Gly-254, Cys-286, and Glu-387 together coordinate NAD(+). Cys-286 (nucleophile) is an active-site residue. Cys-286 carries the cysteine sulfenic acid (-SOH) modification. The K(+) site is built by Lys-457 and Gly-460. Catalysis depends on Glu-464, which acts as the Charge relay system.

This sequence belongs to the aldehyde dehydrogenase family. In terms of assembly, dimer of dimers. It depends on K(+) as a cofactor.

It carries out the reaction betaine aldehyde + NAD(+) + H2O = glycine betaine + NADH + 2 H(+). Its pathway is amine and polyamine biosynthesis; betaine biosynthesis via choline pathway; betaine from betaine aldehyde: step 1/1. Functionally, involved in the biosynthesis of the osmoprotectant glycine betaine. Catalyzes the irreversible oxidation of betaine aldehyde to the corresponding acid. This is Betaine aldehyde dehydrogenase from Klebsiella pneumoniae (strain 342).